The sequence spans 653 residues: Fusexin 1 (653 aa).

An N-terminal signal peptide occupies residues M1–A23. The Extracellular portion of the chain corresponds to A24–G559. Cystine bridges form between C126-C166, C397-C440, C467-C490, and C502-C519. A fusion loop region spans residues D154–Q159. A helical membrane pass occupies residues A560–V580. Over G581–D600 the chain is Cytoplasmic. A run of 2 helical transmembrane segments spans residues A601–Q621 and L622–L642. Residues Y643–L653 lie on the Cytoplasmic side of the membrane.

This sequence belongs to the HAP2/GCS1 family. Fusexin 1 subfamily. Homotrimer stabilized by interdomain contacts and numerous Ca(2+) and Na(+) ions.

The protein resides in the cell surface. It localises to the cell membrane. Its function is as follows. Exhibits fusogenic activity. Mediates cell-cell fusion in mammalian cells (bilateral fusion). In Haloferax sp. (strain Q22), this protein is Fusexin 1.